A 96-amino-acid chain; its full sequence is Large ribosomal subunit protein bL25 (96 aa).

This sequence belongs to the bacterial ribosomal protein bL25 family. As to quaternary structure, part of the 50S ribosomal subunit; part of the 5S rRNA/L5/L18/L25 subcomplex. Contacts the 5S rRNA. Binds to the 5S rRNA independently of L5 and L18.

Functionally, this is one of the proteins that binds to the 5S RNA in the ribosome where it forms part of the central protuberance. This Francisella tularensis subsp. tularensis (strain FSC 198) protein is Large ribosomal subunit protein bL25.